The chain runs to 588 residues: BTB/POZ domain-containing protein At3g26490 (588 aa).

Residues 28–99 (NDLVIQVKST…CYGITITLCA (72 aa)) enclose the BTB domain. Residues 218–507 (RWWGEDLAEL…VQILFVEQAR (290 aa)) form the NPH3 domain. Residues Ser376 and Ser378 each carry the phosphoserine modification. Tyr448 is subject to Phosphotyrosine. A disordered region spans residues 529 to 554 (FTTRREEGGQEEEERDETKPSGGFLQ).

It belongs to the NPH3 family.

It participates in protein modification; protein ubiquitination. Its function is as follows. May act as a substrate-specific adapter of an E3 ubiquitin-protein ligase complex (CUL3-RBX1-BTB) which mediates the ubiquitination and subsequent proteasomal degradation of target proteins. The sequence is that of BTB/POZ domain-containing protein At3g26490 from Arabidopsis thaliana (Mouse-ear cress).